The sequence spans 209 residues: Large ribosomal subunit protein uL3 (209 aa).

Residues 128–156 (FAGGSRTHGQSDRLRAPGSVGGSSDPSRT) are disordered.

It belongs to the universal ribosomal protein uL3 family. In terms of assembly, part of the 50S ribosomal subunit. Forms a cluster with proteins L14 and L19.

Functionally, one of the primary rRNA binding proteins, it binds directly near the 3'-end of the 23S rRNA, where it nucleates assembly of the 50S subunit. The chain is Large ribosomal subunit protein uL3 from Prosthecochloris aestuarii (strain DSM 271 / SK 413).